The chain runs to 566 residues: Protein OBERON 1 (566 aa).

The segment covering methionine 1–proline 10 has biased composition (polar residues). The tract at residues methionine 1 to histidine 79 is disordered. The span at glutamine 18–serine 29 shows a compositional bias: low complexity. Residues glutamate 47–serine 60 show a composition bias toward polar residues. Basic and acidic residues predominate over residues arginine 64 to histidine 79. The PHD-type zinc finger occupies leucine 225–threonine 289. Positions glutamate 407 to serine 522 form a coiled coil. The segment at tyrosine 545–proline 566 is disordered. The span at arginine 555–proline 566 shows a compositional bias: polar residues.

As to quaternary structure, self-interacts. Interacts with OBE2, OBE3 and OBE4. Binds to VPg of pea seed borne mosaic virus (PSbMV), turnip mosaic virus (TuMV) and lettuce mosaic virus (LMV), but not with VPg of tobacco etch virus (TEV), cowpea mosaic virus (CPMV), tomato black ring virus (TBRV) and grapevine fan leaf virus (GFLV). Interacts with RBL. Expressed in roots, seedlings, stems, leaves, flowers and siliques, especially in the vasculature.

The protein resides in the nucleus. It is found in the nucleoplasm. Functionally, probable transcription factor that acts together with OBE2 for the maintenance and/or establishment of both the shoot and root meristems, probably by controlling the expression of the meristem genes such as WUS, PLT1 and PLT2 and of genes required for auxin responses. Promotes cell meristematic activity via the WUSCHEL-CLAVATA pathway. Involved in the development of the basal pole and in auxin-mediated root and vascular development in the embryo. Confers sensitivity to turnip mosaic virus (TuMV) probably by promoting viral movement and multiplication via interaction with TuMV VPg. This Arabidopsis thaliana (Mouse-ear cress) protein is Protein OBERON 1.